The primary structure comprises 104 residues: L-rhamnose mutarotase (104 aa).

Tyrosine 18 serves as a coordination point for substrate. The Proton donor role is filled by histidine 22. Substrate is bound by residues tyrosine 41 and 76-77; that span reads WW.

The protein belongs to the rhamnose mutarotase family. Homodimer.

Its subcellular location is the cytoplasm. The catalysed reaction is alpha-L-rhamnose = beta-L-rhamnose. The protein operates within carbohydrate metabolism; L-rhamnose metabolism. In terms of biological role, involved in the anomeric conversion of L-rhamnose. The sequence is that of L-rhamnose mutarotase from Lachnoclostridium phytofermentans (strain ATCC 700394 / DSM 18823 / ISDg) (Clostridium phytofermentans).